We begin with the raw amino-acid sequence, 93 residues long: Small ribosomal subunit protein uS19 (93 aa).

The protein belongs to the universal ribosomal protein uS19 family.

In terms of biological role, protein S19 forms a complex with S13 that binds strongly to the 16S ribosomal RNA. This is Small ribosomal subunit protein uS19 from Desulfitobacterium hafniense (strain DSM 10664 / DCB-2).